Here is a 1121-residue protein sequence, read N- to C-terminus: Cilia- and flagella-associated protein 70 (1121 aa).

Over residues 410–428 (NLKEDKPVKEKDIDGRPRP) the composition is skewed to basic and acidic residues. The interval 410–457 (NLKEDKPVKEKDIDGRPRPGDVQAPSIKSQSSDTPLEGEPPLSHNPEG) is disordered. TPR repeat units lie at residues 635-668 (SEQL…EPQN), 669-702 (LDHW…NQSH), and 704-736 (HSLL…EPTN). 2 disordered regions span residues 778–802 (KQKS…PWGI) and 836–858 (QSDS…QKPS). 5 TPR repeats span residues 929–962 (CEYY…DYLN), 963–996 (PNVW…VVDA), 1000–1033 (HFIF…SPSC), 1035–1066 (TWLG…NNYN), and 1068–1100 (EVWA…KLKD).

The protein belongs to the CFAP70 family. Expressed in testis.

It is found in the cell projection. Its subcellular location is the cilium. The protein localises to the flagellum. It localises to the cytoplasm. The protein resides in the cytoskeleton. It is found in the flagellum basal body. Its subcellular location is the cilium axoneme. In terms of biological role, axoneme-binding protein that plays a role in the regulation of ciliary motility and cilium length. The polypeptide is Cilia- and flagella-associated protein 70 (Homo sapiens (Human)).